Consider the following 272-residue polypeptide: Tryptophan synthase alpha chain (272 aa).

Active-site proton acceptor residues include glutamate 49 and glutamate 60.

The protein belongs to the TrpA family. Tetramer of two alpha and two beta chains.

The catalysed reaction is (1S,2R)-1-C-(indol-3-yl)glycerol 3-phosphate + L-serine = D-glyceraldehyde 3-phosphate + L-tryptophan + H2O. Its pathway is amino-acid biosynthesis; L-tryptophan biosynthesis; L-tryptophan from chorismate: step 5/5. Functionally, the alpha subunit is responsible for the aldol cleavage of indoleglycerol phosphate to indole and glyceraldehyde 3-phosphate. The polypeptide is Tryptophan synthase alpha chain (Legionella pneumophila (strain Lens)).